Consider the following 398-residue polypeptide: CCA-adding enzyme (398 aa).

Residues glycine 32 and arginine 35 each contribute to the ATP site. 2 residues coordinate CTP: glycine 32 and arginine 35. Residues aspartate 45 and aspartate 47 each coordinate Mg(2+). The ATP site is built by arginine 116, aspartate 159, arginine 162, arginine 165, and arginine 168. CTP contacts are provided by arginine 116, aspartate 159, arginine 162, arginine 165, and arginine 168.

The protein belongs to the tRNA nucleotidyltransferase/poly(A) polymerase family. Bacterial CCA-adding enzyme type 3 subfamily. Homodimer. The cofactor is Mg(2+).

It carries out the reaction a tRNA precursor + 2 CTP + ATP = a tRNA with a 3' CCA end + 3 diphosphate. The catalysed reaction is a tRNA with a 3' CCA end + 2 CTP + ATP = a tRNA with a 3' CCACCA end + 3 diphosphate. Catalyzes the addition and repair of the essential 3'-terminal CCA sequence in tRNAs without using a nucleic acid template. Adds these three nucleotides in the order of C, C, and A to the tRNA nucleotide-73, using CTP and ATP as substrates and producing inorganic pyrophosphate. tRNA 3'-terminal CCA addition is required both for tRNA processing and repair. Also involved in tRNA surveillance by mediating tandem CCA addition to generate a CCACCA at the 3' terminus of unstable tRNAs. While stable tRNAs receive only 3'-terminal CCA, unstable tRNAs are marked with CCACCA and rapidly degraded. The chain is CCA-adding enzyme from Lacticaseibacillus paracasei (strain ATCC 334 / BCRC 17002 / CCUG 31169 / CIP 107868 / KCTC 3260 / NRRL B-441) (Lactobacillus paracasei).